Reading from the N-terminus, the 344-residue chain is Cyclin-dependent kinase 20 (344 aa).

The Protein kinase domain maps to 4–288; that stretch reads YSILGRIGEG…ARQALLHPYF (285 aa). Residues 10-18 and K33 each bind ATP; that span reads IGEGAHGIV. D127 acts as the Proton acceptor in catalysis.

Belongs to the protein kinase superfamily. CMGC Ser/Thr protein kinase family. CDC2/CDKX subfamily. In terms of assembly, monomer. Interacts with tbc1d32.

It localises to the nucleus. The protein resides in the cytoplasm. It is found in the cell projection. The protein localises to the cilium. The enzyme catalyses L-seryl-[protein] + ATP = O-phospho-L-seryl-[protein] + ADP + H(+). It carries out the reaction L-threonyl-[protein] + ATP = O-phospho-L-threonyl-[protein] + ADP + H(+). Its function is as follows. Involved in cell growth. Activates cdk2, a kinase involved in the control of the cell cycle, by phosphorylating residue 'Thr-160'. Required for high-level Shh responses in the developing neural tube. Together with tbc1d32, controls the structure of the primary cilium by coordinating assembly of the ciliary membrane and axoneme, allowing gli2 to be properly activated in response to SHH signaling. This Danio rerio (Zebrafish) protein is Cyclin-dependent kinase 20 (cdk20).